The following is a 415-amino-acid chain: L-cysteine:1D-myo-inositol 2-amino-2-deoxy-alpha-D-glucopyranoside ligase (415 aa).

Positions methionine 1–arginine 20 are disordered. Zn(2+) is bound at residue cysteine 43. Residues cysteine 43–threonine 46, threonine 58, and asparagine 81–threonine 83 each bind L-cysteinyl-5'-AMP. A 'HIGH' region motif is present at residues isoleucine 45–histidine 55. The 'ERGGDP' region signature appears at glutamate 187 to proline 192. Tryptophan 227 is an L-cysteinyl-5'-AMP binding site. Cysteine 231 serves as a coordination point for Zn(2+). L-cysteinyl-5'-AMP is bound at residue glycine 249–aspartate 251. Histidine 256 provides a ligand contact to Zn(2+). Residue isoleucine 283 coordinates L-cysteinyl-5'-AMP. The short motif at lysine 289–serine 293 is the 'KMSKS' region element.

Belongs to the class-I aminoacyl-tRNA synthetase family. MshC subfamily. Monomer. Zn(2+) serves as cofactor.

It carries out the reaction 1D-myo-inositol 2-amino-2-deoxy-alpha-D-glucopyranoside + L-cysteine + ATP = 1D-myo-inositol 2-(L-cysteinylamino)-2-deoxy-alpha-D-glucopyranoside + AMP + diphosphate + H(+). Catalyzes the ATP-dependent condensation of GlcN-Ins and L-cysteine to form L-Cys-GlcN-Ins. This chain is L-cysteine:1D-myo-inositol 2-amino-2-deoxy-alpha-D-glucopyranoside ligase, found in Rhodococcus jostii (strain RHA1).